The chain runs to 1396 residues: Sterol 3-beta-glucosyltransferase (1396 aa).

Positions 1–16 (MRPFIDDAKRRAERRL) are enriched in basic and acidic residues. 4 disordered regions span residues 1–21 (MRPF…ASRQ), 40–64 (DADD…MQYM), 83–196 (ARFD…RAAP), and 209–232 (ETEN…KKSQ). Residues 94-107 (ETRTRPRFLSEKPF) are compositionally biased toward basic and acidic residues. A compositionally biased stretch (low complexity) spans 186–196 (RPRSATPRAAP). Residues 238–273 (RQLMEMFRFPTPEKVVVEYACSLLQSMLLQGYMYVT) enclose the GRAM 1 domain. The PH domain occupies 289 to 388 (RVIKSGYIYK…WVRALQKVIF (100 aa)). Disordered regions lie at residues 460-532 (GTPT…SSSS) and 571-627 (TIHT…ESKD). 2 stretches are compositionally biased toward polar residues: residues 484-532 (GSQN…SSSS) and 571-584 (TIHT…GTAR). Residues 588–602 (RHSDEITRSTTEHGL) show a composition bias toward basic and acidic residues. The 67-residue stretch at 717–783 (ERFRAHFALP…HDIENVEKEK (67 aa)) folds into the GRAM 2 domain. Residues Ser905, Arg906, Asp908, Ala1208, His1210, His1223, Gly1227, Thr1228, Asp1247, and Gln1248 each coordinate UDP-alpha-D-glucose. Positions 1324-1343 (SSISSTPFSPTPSTKTSDDQ) are enriched in low complexity. The disordered stretch occupies residues 1324-1346 (SSISSTPFSPTPSTKTSDDQNAN).

Belongs to the glycosyltransferase 28 family.

The protein localises to the cytoplasm. Its subcellular location is the preautophagosomal structure membrane. It carries out the reaction a sterol + UDP-alpha-D-glucose = a sterol 3-beta-D-glucoside + UDP + H(+). The catalysed reaction is ergosterol + UDP-alpha-D-glucose = ergosteryl 3-beta-D-glucoside + UDP + H(+). Functionally, sterol glycosyltransferase responsible for the glycosylation of ergosterol to form ergosterol-glucoside. The protein is Sterol 3-beta-glucosyltransferase of Emericella nidulans (strain FGSC A4 / ATCC 38163 / CBS 112.46 / NRRL 194 / M139) (Aspergillus nidulans).